Reading from the N-terminus, the 428-residue chain is MRVVVLGSGVVGVASAYYLARAGHEVTVIDREAGPALETSFANAGQISPGYAAPWAAPGVPLKAVKWMFEKHAPLAIRLDGTRFQLQWMWQMLRNCTADRYAVNKGRMVRLAEYSRDCLQALRADTGIQYEGRTGGTLQLFRTQQQLDGAAKDIAVLQEANVPFELLSPAELKNAEPALAAVSHKLTGGLRLPGDETGDCQLFTTRLAALAESLGVKFRYNTPIDALAIAGGRIAGVQCGSETVRADAYVVALGSYSTSFISNLMKIPVYPLKGYSITAPIVNDAAAPVSTVLDETYKIAITRFDQRIRVGGMAEIVGFDKNLRAARRETLEMCVNDLFPGGGDTSKATFWTGLRPMTPDGTPIVGRTPVSNLFLNTGHGTLGWTMSCGSGQLLADLISGKKPAIQADDLSVHRYLKDVAGQTRPAYA.

3–17 is a binding site for FAD; it reads VVVLGSGVVGVASAY.

It belongs to the DadA oxidoreductase family. Requires FAD as cofactor.

The enzyme catalyses a D-alpha-amino acid + A + H2O = a 2-oxocarboxylate + AH2 + NH4(+). It functions in the pathway amino-acid degradation; D-alanine degradation; NH(3) and pyruvate from D-alanine: step 1/1. Its function is as follows. Oxidative deamination of D-amino acids. This chain is D-amino acid dehydrogenase, found in Burkholderia ambifaria (strain MC40-6).